A 78-amino-acid polypeptide reads, in one-letter code: Probable [Fe-S]-dependent transcriptional repressor (78 aa).

Iron-sulfur cluster-binding residues include C56, C61, C64, and C70.

This sequence belongs to the FeoC family.

Functionally, may function as a transcriptional regulator that controls feoABC expression. This Escherichia coli (strain UTI89 / UPEC) protein is Probable [Fe-S]-dependent transcriptional repressor.